A 204-amino-acid polypeptide reads, in one-letter code: Heart- and neural crest derivatives-expressed protein 1 (204 aa).

Disordered regions lie at residues 1-24 (MNLV…HPAH), 57-115 (APDF…RTES), and 172-204 (LKKA…EKRD). 2 stretches are compositionally biased toward basic residues: residues 8–22 (AHHH…HPHP) and 98–110 (LGRR…KKER). One can recognise a bHLH domain in the interval 100 to 152 (RRKGSGPKKERRRTESINSAFAELRECIPNVPADTKLSKIKTLRLATSYIAYL). Thr-113 carries the phosphothreonine; by PLK4 modification. Ser-115 carries the post-translational modification Phosphoserine; by PLK4.

Efficient DNA binding requires dimerization with another bHLH protein. Forms homodimers and heterodimers with TCF3 gene products E12 and E47, HAND2 and HEY1, HEY2 and HEYL (hairy-related transcription factors). Interacts with MDFIC. Interacts with SOX15; the interaction enhances HAND1-induced differentiation of trophoblast giant cells. Post-translationally, phosphorylation by PLK4 disrupts the interaction with MDFIC and leads to translocation into the nucleoplasm, allowing dimerization and transcription factor activity.

It localises to the nucleus. The protein resides in the nucleoplasm. It is found in the nucleolus. In terms of biological role, transcription factor that plays an essential role in both trophoblast giant cell differentiation and in cardiac morphogenesis. Binds the DNA sequence 5'-NRTCTG-3' (non-canonical E-box). Acts as a transcriptional repressor of SOX15. In the adult, could be required for ongoing expression of cardiac-specific genes. The sequence is that of Heart- and neural crest derivatives-expressed protein 1 (HAND1) from Ovis aries (Sheep).